A 1734-amino-acid polypeptide reads, in one-letter code: Protein TIC 214 (1734 aa).

6 helical membrane-spanning segments follow: residues 19–39, 68–88, 91–111, 133–153, 176–196, and 227–247; these read IINSVVVVGLYYGFLTTFSIG, FIAGQLMMFISIYYAPLHLAL, PHTITVLALPYLLFHFFWNNH, VFLNNLIFQLFNHFILPSSML, VGWLIGHILFMKWVGLVLVWI, and IFSILLFITCVYYLGRMPSPI. Positions 1433–1485 form a coiled coil; the sequence is NLNNEEKELADEVELESDNEKQINPESALSNQEKTIQEIYAESKKKKRQNKKQ.

Belongs to the TIC214 family. In terms of assembly, part of the Tic complex.

The protein localises to the plastid. The protein resides in the chloroplast inner membrane. Its function is as follows. Involved in protein precursor import into chloroplasts. May be part of an intermediate translocation complex acting as a protein-conducting channel at the inner envelope. In Lepidium virginicum (Virginia pepperweed), this protein is Protein TIC 214.